A 324-amino-acid chain; its full sequence is Cytochrome c biogenesis protein CcsA (324 aa).

The next 8 membrane-spanning stretches (helical) occupy residues 15–35 (FSIV…DEII), 44–64 (GMIA…IYSG), 71–91 (LYES…VPYF), 98–118 (LSTI…SGLL), 143–163 (MILG…LLVL), 228–248 (VISL…VWAN), 255–275 (WNWD…AVYL), and 289–309 (AIVA…VNLL).

It belongs to the CcmF/CycK/Ccl1/NrfE/CcsA family. In terms of assembly, may interact with Ccs1.

It is found in the plastid. It localises to the chloroplast thylakoid membrane. In terms of biological role, required during biogenesis of c-type cytochromes (cytochrome c6 and cytochrome f) at the step of heme attachment. This Daucus carota (Wild carrot) protein is Cytochrome c biogenesis protein CcsA.